The following is a 319-amino-acid chain: Aspartate carbamoyltransferase catalytic subunit (319 aa).

2 residues coordinate carbamoyl phosphate: R55 and T56. Residue K83 coordinates L-aspartate. Residues R105, H144, and Q147 each contribute to the carbamoyl phosphate site. L-aspartate contacts are provided by R177 and R231. The carbamoyl phosphate site is built by G272 and P273.

It belongs to the aspartate/ornithine carbamoyltransferase superfamily. ATCase family. In terms of assembly, heterododecamer (2C3:3R2) of six catalytic PyrB chains organized as two trimers (C3), and six regulatory PyrI chains organized as three dimers (R2).

It catalyses the reaction carbamoyl phosphate + L-aspartate = N-carbamoyl-L-aspartate + phosphate + H(+). Its pathway is pyrimidine metabolism; UMP biosynthesis via de novo pathway; (S)-dihydroorotate from bicarbonate: step 2/3. Catalyzes the condensation of carbamoyl phosphate and aspartate to form carbamoyl aspartate and inorganic phosphate, the committed step in the de novo pyrimidine nucleotide biosynthesis pathway. The sequence is that of Aspartate carbamoyltransferase catalytic subunit from Nocardia farcinica (strain IFM 10152).